An 84-amino-acid chain; its full sequence is Cell division topological specificity factor (84 aa).

Belongs to the MinE family.

Functionally, prevents the cell division inhibition by proteins MinC and MinD at internal division sites while permitting inhibition at polar sites. This ensures cell division at the proper site by restricting the formation of a division septum at the midpoint of the long axis of the cell. The protein is Cell division topological specificity factor of Ectopseudomonas mendocina (strain ymp) (Pseudomonas mendocina).